The following is a 122-amino-acid chain: Ribosome-binding factor A (122 aa).

The protein belongs to the RbfA family. Monomer. Binds 30S ribosomal subunits, but not 50S ribosomal subunits or 70S ribosomes.

Its subcellular location is the cytoplasm. In terms of biological role, one of several proteins that assist in the late maturation steps of the functional core of the 30S ribosomal subunit. Associates with free 30S ribosomal subunits (but not with 30S subunits that are part of 70S ribosomes or polysomes). Required for efficient processing of 16S rRNA. May interact with the 5'-terminal helix region of 16S rRNA. In Cupriavidus necator (strain ATCC 17699 / DSM 428 / KCTC 22496 / NCIMB 10442 / H16 / Stanier 337) (Ralstonia eutropha), this protein is Ribosome-binding factor A.